A 127-amino-acid polypeptide reads, in one-letter code: Fumarate reductase subunit C (127 aa).

A run of 3 helical transmembrane segments spans residues 30–50 (ATVL…GSLV), 67–87 (LVIA…QTFF), and 107–127 (IIVL…LIVV).

It belongs to the FrdC family. As to quaternary structure, part of an enzyme complex containing four subunits: a flavoprotein (FrdA), an iron-sulfur protein (FrdB), and two hydrophobic anchor proteins (FrdC and FrdD).

The protein resides in the cell inner membrane. Anchors the catalytic components of the fumarate reductase complex to the cell membrane, binds quinones. The protein is Fumarate reductase subunit C of Vibrio cholerae serotype O1 (strain ATCC 39541 / Classical Ogawa 395 / O395).